Reading from the N-terminus, the 344-residue chain is Small ribosomal subunit protein bS1m (344 aa).

Phosphoserine is present on Ser327.

This sequence belongs to the bacterial ribosomal protein bS1 family. In terms of assembly, component of the mitochondrial small ribosomal subunit (mt-SSU). Mature yeast 74S mitochondrial ribosomes consist of a small (37S) and a large (54S) subunit. The 37S small subunit contains a 15S ribosomal RNA (15S mt-rRNA) and 34 different proteins. The 54S large subunit contains a 21S rRNA (21S mt-rRNA) and 46 different proteins.

It is found in the mitochondrion. Functionally, component of the mitochondrial ribosome (mitoribosome), a dedicated translation machinery responsible for the synthesis of mitochondrial genome-encoded proteins, including at least some of the essential transmembrane subunits of the mitochondrial respiratory chain. The mitoribosomes are attached to the mitochondrial inner membrane and translation products are cotranslationally integrated into the membrane. bS1m functionally interacts with the 5'-UTR of mitochondrial mRNAs. The chain is Small ribosomal subunit protein bS1m (MRP51) from Saccharomyces cerevisiae (strain ATCC 204508 / S288c) (Baker's yeast).